We begin with the raw amino-acid sequence, 277 residues long: Phosphatidylserine decarboxylase proenzyme (277 aa).

Catalysis depends on charge relay system; for autoendoproteolytic cleavage activity residues Asp-88, His-144, and Ser-242. Catalysis depends on Ser-242, which acts as the Schiff-base intermediate with substrate; via pyruvic acid; for decarboxylase activity. At Ser-242 the chain carries Pyruvic acid (Ser); by autocatalysis.

This sequence belongs to the phosphatidylserine decarboxylase family. PSD-B subfamily. Prokaryotic type I sub-subfamily. Heterodimer of a large membrane-associated beta subunit and a small pyruvoyl-containing alpha subunit. It depends on pyruvate as a cofactor. Post-translationally, is synthesized initially as an inactive proenzyme. Formation of the active enzyme involves a self-maturation process in which the active site pyruvoyl group is generated from an internal serine residue via an autocatalytic post-translational modification. Two non-identical subunits are generated from the proenzyme in this reaction, and the pyruvate is formed at the N-terminus of the alpha chain, which is derived from the carboxyl end of the proenzyme. The autoendoproteolytic cleavage occurs by a canonical serine protease mechanism, in which the side chain hydroxyl group of the serine supplies its oxygen atom to form the C-terminus of the beta chain, while the remainder of the serine residue undergoes an oxidative deamination to produce ammonia and the pyruvoyl prosthetic group on the alpha chain. During this reaction, the Ser that is part of the protease active site of the proenzyme becomes the pyruvoyl prosthetic group, which constitutes an essential element of the active site of the mature decarboxylase.

It is found in the cell membrane. It carries out the reaction a 1,2-diacyl-sn-glycero-3-phospho-L-serine + H(+) = a 1,2-diacyl-sn-glycero-3-phosphoethanolamine + CO2. It functions in the pathway phospholipid metabolism; phosphatidylethanolamine biosynthesis; phosphatidylethanolamine from CDP-diacylglycerol: step 2/2. Functionally, catalyzes the formation of phosphatidylethanolamine (PtdEtn) from phosphatidylserine (PtdSer). This chain is Phosphatidylserine decarboxylase proenzyme, found in Psychrobacter cryohalolentis (strain ATCC BAA-1226 / DSM 17306 / VKM B-2378 / K5).